A 436-amino-acid polypeptide reads, in one-letter code: 3-phosphoshikimate 1-carboxyvinyltransferase (436 aa).

Positions 23, 24, and 28 each coordinate 3-phosphoshikimate. Residue Lys-23 participates in phosphoenolpyruvate binding. Positions 97 and 126 each coordinate phosphoenolpyruvate. Residues Ser-171, Gln-173, Asp-323, and Lys-350 each contribute to the 3-phosphoshikimate site. A phosphoenolpyruvate-binding site is contributed by Gln-173. Asp-323 (proton acceptor) is an active-site residue. Residues Arg-354 and Arg-396 each contribute to the phosphoenolpyruvate site.

This sequence belongs to the EPSP synthase family. Monomer.

The protein localises to the cytoplasm. The catalysed reaction is 3-phosphoshikimate + phosphoenolpyruvate = 5-O-(1-carboxyvinyl)-3-phosphoshikimate + phosphate. The protein operates within metabolic intermediate biosynthesis; chorismate biosynthesis; chorismate from D-erythrose 4-phosphate and phosphoenolpyruvate: step 6/7. Its function is as follows. Catalyzes the transfer of the enolpyruvyl moiety of phosphoenolpyruvate (PEP) to the 5-hydroxyl of shikimate-3-phosphate (S3P) to produce enolpyruvyl shikimate-3-phosphate and inorganic phosphate. This is 3-phosphoshikimate 1-carboxyvinyltransferase from Prochlorococcus marinus (strain MIT 9301).